A 287-amino-acid chain; its full sequence is Protease HtpX (287 aa).

A run of 2 helical transmembrane segments spans residues 4 to 24 (IFLL…VMSI) and 33 to 53 (GGLL…SLAI). Zn(2+) is bound at residue histidine 139. Glutamate 140 is an active-site residue. Histidine 143 is a binding site for Zn(2+). 2 helical membrane passes run 154-174 (LIQG…ASII) and 195-215 (AVVF…VAYF). Glutamate 220 serves as a coordination point for Zn(2+).

Belongs to the peptidase M48B family. It depends on Zn(2+) as a cofactor.

It is found in the cell inner membrane. The chain is Protease HtpX from Shewanella loihica (strain ATCC BAA-1088 / PV-4).